Here is a 658-residue protein sequence, read N- to C-terminus: Katanin p80 WD40 repeat-containing subunit B1 (658 aa).

Residues 1-284 form an interaction with dynein region; sequence MATPVVTKTA…VADLAICNDQ (284 aa). The segment at 1-300 is interaction with centrosomes; it reads MATPVVTKTA…SQSNVSSYVV (300 aa). 6 WD repeats span residues 18 to 58, 61 to 100, 103 to 142, 145 to 184, 187 to 226, and 229 to 269; these read AHAS…CIMS, GHTS…ILRT, GHKA…CVFR, GHSQ…MMSE, GHTG…VVSC, and GEPG…DVVL. Positions 285-437 are interaction with PAFAH1B1; that stretch reads LIGVAFSQSN…LPQLPVPNLE (153 aa). Polar residues predominate over residues 311-329; it reads VTQDPVQANQPLTQQTPNP. Disordered regions lie at residues 311–419 and 434–458; these read VTQD…EVSK and PNLE…PDII. Over residues 352–374 the composition is skewed to basic and acidic residues; sequence HNSESERRSPSSEDDRDERESRA. T395 carries the phosphothreonine modification. The interval 436-658 is interaction with KATNA1 and NDEL1; sequence LEVPARPSVM…ELHLLMASLD (223 aa).

The protein belongs to the WD repeat KATNB1 family. As to quaternary structure, interacts with KATNA1. This interaction enhances the microtubule binding and severing activity of KATNA1 and also targets this activity to the centrosome. This interaction is weakly competed by KATNBL1 which has a lower affinity for it. Interacts with ASPM; the katanin complex formation KATNA1:KATNB1 is required for the association of ASPM. Interacts with dynein, microtubules, NDEL1 and PAFAH1B1. Interacts with KATNAL1; this interaction is weakly competed by KATNBL1 which has a lower affinity for it. Interacts with CAMSAP2 and CAMSAP3; leading to regulate the length of CAMSAP-decorated microtubule stretches.

The protein localises to the cytoplasm. It localises to the cytoskeleton. Its subcellular location is the microtubule organizing center. It is found in the centrosome. The protein resides in the spindle pole. The protein localises to the spindle. Its function is as follows. Participates in a complex which severs microtubules in an ATP-dependent manner. May act to target the enzymatic subunit of this complex to sites of action such as the centrosome. Microtubule severing may promote rapid reorganization of cellular microtubule arrays and the release of microtubules from the centrosome following nucleation. Microtubule release from the mitotic spindle poles may allow depolymerization of the microtubule end proximal to the spindle pole, leading to poleward microtubule flux and poleward motion of chromosome. The function in regulating microtubule dynamics at spindle poles seems to depend on the association of the katanin KATNA1:KATNB1 complex with ASPM which recruits it to microtubules. Reversely KATNA1:KATNB1 can enhance ASPM blocking activity on microtubule minus-end growth. Microtubule release within the cell body of neurons may be required for their transport into neuronal processes by microtubule-dependent motor proteins. This transport is required for axonal growth. This is Katanin p80 WD40 repeat-containing subunit B1 (Katnb1) from Mus musculus (Mouse).